The chain runs to 89 residues: Cell division topological specificity factor (89 aa).

The protein belongs to the MinE family.

Functionally, prevents the cell division inhibition by proteins MinC and MinD at internal division sites while permitting inhibition at polar sites. This ensures cell division at the proper site by restricting the formation of a division septum at the midpoint of the long axis of the cell. The protein is Cell division topological specificity factor of Proteus mirabilis (strain HI4320).